The sequence spans 191 residues: Adenylate kinase (191 aa).

Position 10-15 (10-15 (GAGKGT)) interacts with ATP. Residues 30 to 59 (STGDIFRANVTEGTPLGVEAKRYMDAGEYV) are NMP. AMP contacts are provided by residues threonine 31, arginine 36, 57-59 (EYV), 85-88 (GYPR), and glutamine 92. The LID stretch occupies residues 126–136 (QRAQVEGRADD). Arginine 127 is a binding site for ATP. Positions 133 and 144 each coordinate AMP. Glycine 172 contributes to the ATP binding site.

This sequence belongs to the adenylate kinase family. Monomer.

It is found in the cytoplasm. It catalyses the reaction AMP + ATP = 2 ADP. Its pathway is purine metabolism; AMP biosynthesis via salvage pathway; AMP from ADP: step 1/1. In terms of biological role, catalyzes the reversible transfer of the terminal phosphate group between ATP and AMP. Plays an important role in cellular energy homeostasis and in adenine nucleotide metabolism. This is Adenylate kinase from Nocardioides sp. (strain ATCC BAA-499 / JS614).